The primary structure comprises 377 residues: MIPMTIVQKMILMEIVQKMILITIIQKMNQIANYTMKKIINAPGIIKLTKKEKIKDNDGNIIEIEVRGTRDPENIFFRVSDVINGFDMPKLYDTITRNNSGYRQNIHYRYFNFKKTTKKGYCMKLFLTFIGMEKVINCSRSIHIQNAMIARKWLSQFSASIKFNSLVLDSSKSSTSNIGYVYCITSEKIDANKIGYWKGTRKDLICRYKTYYGDYVELFCVKTMYPELLEKKCHQHFINYKLSHELYDKSNTDKYKLYLKENKITPTEQDIYEDQQITKTDVKTLFTTHLTTQDQKNKLSSKLMGIPTNIISVDKIKELENEIKELKYQNEIKELKYQNEIKELKYQNEINELKYKNIILEKDLEISNLNKKLKKKN.

The stretch at 309-375 (NIISVDKIKE…ISNLNKKLKK (67 aa)) forms a coiled coil.

This sequence belongs to the mimivirus L5 family.

This is an uncharacterized protein from Acanthamoeba polyphaga (Amoeba).